The primary structure comprises 111 residues: Cytochrome b-c1 complex subunit 7 (111 aa).

Alanine 2 carries the N-acetylalanine modification. At lysine 12 the chain carries N6-acetyllysine; alternate. Position 12 is an N6-succinyllysine; alternate (lysine 12). Position 19 is an N6-acetyllysine (lysine 19). Lysine 78 is modified (N6-acetyllysine; alternate). Lysine 78 is subject to N6-succinyllysine; alternate. N6-acetyllysine occurs at positions 83 and 96.

This sequence belongs to the UQCRB/QCR7 family. Component of the ubiquinol-cytochrome c oxidoreductase (cytochrome b-c1 complex, complex III, CIII), a multisubunit enzyme composed of 11 subunits. The complex is composed of 3 respiratory subunits cytochrome b, cytochrome c1 and Rieske protein UQCRFS1, 2 core protein subunits UQCRC1/QCR1 and UQCRC2/QCR2, and 6 low-molecular weight protein subunits UQCRH/QCR6, UQCRB/QCR7, UQCRQ/QCR8, UQCR10/QCR9, UQCR11/QCR10 and subunit 9, the cleavage product of Rieske protein UQCRFS1. The complex exists as an obligatory dimer and forms supercomplexes (SCs) in the inner mitochondrial membrane with NADH-ubiquinone oxidoreductase (complex I, CI) and cytochrome c oxidase (complex IV, CIV), resulting in different assemblies (supercomplex SCI(1)III(2)IV(1) and megacomplex MCI(2)III(2)IV(2)).

The protein localises to the mitochondrion inner membrane. Its function is as follows. Component of the ubiquinol-cytochrome c oxidoreductase, a multisubunit transmembrane complex that is part of the mitochondrial electron transport chain which drives oxidative phosphorylation. The respiratory chain contains 3 multisubunit complexes succinate dehydrogenase (complex II, CII), ubiquinol-cytochrome c oxidoreductase (cytochrome b-c1 complex, complex III, CIII) and cytochrome c oxidase (complex IV, CIV), that cooperate to transfer electrons derived from NADH and succinate to molecular oxygen, creating an electrochemical gradient over the inner membrane that drives transmembrane transport and the ATP synthase. The cytochrome b-c1 complex catalyzes electron transfer from ubiquinol to cytochrome c, linking this redox reaction to translocation of protons across the mitochondrial inner membrane, with protons being carried across the membrane as hydrogens on the quinol. In the process called Q cycle, 2 protons are consumed from the matrix, 4 protons are released into the intermembrane space and 2 electrons are passed to cytochrome c. The sequence is that of Cytochrome b-c1 complex subunit 7 (UQCRB) from Pongo abelii (Sumatran orangutan).